We begin with the raw amino-acid sequence, 137 residues long: uncharacterized protein (137 aa).

Residues 30-105 (SLLCVFTALR…IRFIQIPDKI (76 aa)) form the Sm domain.

This is an uncharacterized protein from Dictyostelium discoideum (Social amoeba).